Consider the following 1025-residue polypeptide: Multidrug resistance protein MdtC (1025 aa).

Transmembrane regions (helical) follow at residues 3-23, 333-353, 360-380, 387-407, 431-451, 463-483, 528-548, 853-873, 875-895, 897-917, 953-973, and 984-1004; these read FFAL…AITL, EVEQ…FLFL, IIPA…MYLC, LSLM…IVVL, VGFT…PLLL, FAVT…TLTP, LVGV…ISIP, VILI…LYES, VHPL…LLAL, LFNA…IGIV, PIMM…LSGG, and ITIV…TPVV.

It belongs to the resistance-nodulation-cell division (RND) (TC 2.A.6) family. MdtC subfamily. As to quaternary structure, part of a tripartite efflux system composed of MdtA, MdtB and MdtC. MdtC forms a heteromultimer with MdtB.

The protein resides in the cell inner membrane. Functionally, the MdtABC tripartite complex confers resistance against novobiocin and deoxycholate. This chain is Multidrug resistance protein MdtC, found in Escherichia coli O139:H28 (strain E24377A / ETEC).